The following is a 160-amino-acid chain: UPF0262 protein BSUIS_A0274 (160 aa).

It belongs to the UPF0262 family.

The sequence is that of UPF0262 protein BSUIS_A0274 from Brucella suis (strain ATCC 23445 / NCTC 10510).